Consider the following 201-residue polypeptide: TATA-box-binding protein 2 (201 aa).

2 repeat units span residues 26 to 102 (LQNI…ARII) and 116 to 193 (IQNI…YPVL).

This sequence belongs to the TBP family. Belongs to the TFIID complex together with the TBP-associated factors (TAFs). Binds DNA as monomer.

It localises to the nucleus. Functionally, general transcription factor that functions at the core of the DNA-binding multiprotein factor TFIID. Binding of TFIID to the TATA box is the initial transcriptional step of the pre-initiation complex (PIC), playing a role in the activation of eukaryotic genes transcribed by RNA polymerase II. The sequence is that of TATA-box-binding protein 2 (TBP2) from Triticum aestivum (Wheat).